Here is a 395-residue protein sequence, read N- to C-terminus: Octopamine receptor beta-2R (395 aa).

Topologically, residues 1 to 42 are extracellular; it reads MDPINGSHSGANATISDITNGAYNATDAGEWTSSVMFKLRTC. 3 N-linked (GlcNAc...) asparagine glycosylation sites follow: Asn5, Asn12, and Asn24. The helical transmembrane segment at 43-63 threads the bilayer; sequence VLLLIVIMAVLGNMLVIVSVM. Over 64 to 74 the chain is Cytoplasmic; sequence RHRKLRVITNY. A helical transmembrane segment spans residues 75–95; it reads FVVSLAFADILVAMVVMPFNF. The Extracellular segment spans residues 96 to 117; sequence SVQFNQGWVFGETICDLWNSSD. N-linked (GlcNAc...) asparagine glycosylation occurs at Asn114. A helical membrane pass occupies residues 118 to 140; that stretch reads VYFTSTSILHLCCISVDRYYAIV. Residues 141–154 lie on the Cytoplasmic side of the membrane; that stretch reads KPLKYPIKMTKKMA. The helical transmembrane segment at 155–175 threads the bilayer; sequence FVMLAATWLSPITISYVPIFM. Over 176–202 the chain is Extracellular; sequence GWYTTTDFLESRRDDQCEFKVNKPYAV. The chain crosses the membrane as a helical span at residues 203–223; the sequence is ISSSISFWIPCTIMIFTYLAI. Residues 224–282 lie on the Cytoplasmic side of the membrane; it reads FKEANRQEKALHARAGNAMLMHRHSREVSDKNGALHINATTPTKDRNLLKMKREHKAAR. Residues 283-303 form a helical membrane-spanning segment; it reads TLGIIMGAFILCWLPFFLYYV. The Extracellular segment spans residues 304–315; that stretch reads STSLCDSCNCPE. A helical transmembrane segment spans residues 316-336; it reads VVTVIMFWTGYFNSALNPIIY. The Cytoplasmic segment spans residues 337-395; it reads AYFNRDFRNAFKNTLACAFCSFCKRSASDLDAMERLDRRGSAQLRVPIPSRRASDLASL.

This sequence belongs to the G-protein coupled receptor 1 family.

Its subcellular location is the cell membrane. Functionally, autoreceptor for octopamine, which is a neurotransmitter, neurohormone, and neuromodulator in invertebrates. Also acts as a receptor for tyramine, but with much less potency. The activity of this receptor is mediated by G proteins which activate adenylyl cyclase. This chain is Octopamine receptor beta-2R, found in Chilo suppressalis (Asiatic rice borer moth).